Here is a 554-residue protein sequence, read N- to C-terminus: Hydroxylamine reductase (554 aa).

The [2Fe-2S] cluster site is built by Cys3, Cys6, Cys18, and Cys25. 8 residues coordinate hybrid [4Fe-2O-2S] cluster: His252, Glu276, Cys320, Cys408, Cys436, Cys461, Glu495, and Lys497. The residue at position 408 (Cys408) is a Cysteine persulfide.

This sequence belongs to the HCP family. The cofactor is [2Fe-2S] cluster. It depends on hybrid [4Fe-2O-2S] cluster as a cofactor.

It localises to the cytoplasm. The enzyme catalyses A + NH4(+) + H2O = hydroxylamine + AH2 + H(+). Its function is as follows. Catalyzes the reduction of hydroxylamine to form NH(3) and H(2)O. This is Hydroxylamine reductase from Photobacterium profundum (strain SS9).